The sequence spans 45 residues: Photosystem II reaction center protein K (45 aa).

Residues 1 to 8 (MEGILFLA) constitute a propeptide that is removed on maturation. Residues 24 to 44 (APVIPVFFLLLAFVWQAAVGF) form a helical membrane-spanning segment.

This sequence belongs to the PsbK family. PSII is composed of 1 copy each of membrane proteins PsbA, PsbB, PsbC, PsbD, PsbE, PsbF, PsbH, PsbI, PsbJ, PsbK, PsbL, PsbM, PsbT, PsbX, PsbY, PsbZ, Psb30/Ycf12, at least 3 peripheral proteins of the oxygen-evolving complex and a large number of cofactors. It forms dimeric complexes.

The protein localises to the plastid. The protein resides in the chloroplast thylakoid membrane. Functionally, one of the components of the core complex of photosystem II (PSII). PSII is a light-driven water:plastoquinone oxidoreductase that uses light energy to abstract electrons from H(2)O, generating O(2) and a proton gradient subsequently used for ATP formation. It consists of a core antenna complex that captures photons, and an electron transfer chain that converts photonic excitation into a charge separation. The sequence is that of Photosystem II reaction center protein K from Guillardia theta (Cryptophyte).